The following is a 245-amino-acid chain: Dof zinc finger protein DOF3.2 (245 aa).

A compositionally biased stretch (polar residues) spans 15 to 26; that stretch reads SCSTQDYQNQKK. The segment at 15 to 41 is disordered; it reads SCSTQDYQNQKKPLSATRPAPPEQSLR. A Dof-type zinc finger spans residues 40–94; that stretch reads LRCPRCDSTNTKFCYYNNYSLSQPRYFCKSCRRYWTKGGILRNIPIGGAYRKHKR. Zn(2+)-binding residues include C42, C45, C67, and C70. A disordered region spans residues 91-118; that stretch reads KHKRSSSATKSLRTTPEPTMTHDGKSFP. A compositionally biased stretch (polar residues) spans 96–108; that stretch reads SSATKSLRTTPEP.

Interacts with TCP14. As to expression, the PEAR proteins (e.g. DOF2.4, DOF5.1, DOF3.2, DOF1.1, DOF5.6 and DOF5.3) form a short-range concentration gradient that peaks at protophloem sieve elements (PSE).

The protein resides in the nucleus. In terms of biological role, transcription factor that negatively affects seed germination and opposes TCP14 function in the regulation of a specific set of abscisic acid-related genes. The PEAR proteins (e.g. DOF2.4, DOF5.1, DOF3.2, DOF1.1, DOF5.6 and DOF5.3) activate gene expression that promotes radial growth of protophloem sieve elements. The chain is Dof zinc finger protein DOF3.2 from Arabidopsis thaliana (Mouse-ear cress).